Consider the following 369-residue polypeptide: Phenylalanine--tRNA ligase alpha subunit (369 aa).

Residue Glu269 participates in Mg(2+) binding.

It belongs to the class-II aminoacyl-tRNA synthetase family. Phe-tRNA synthetase alpha subunit type 1 subfamily. As to quaternary structure, tetramer of two alpha and two beta subunits. Mg(2+) is required as a cofactor.

Its subcellular location is the cytoplasm. It carries out the reaction tRNA(Phe) + L-phenylalanine + ATP = L-phenylalanyl-tRNA(Phe) + AMP + diphosphate + H(+). This chain is Phenylalanine--tRNA ligase alpha subunit, found in Brucella melitensis biotype 1 (strain ATCC 23456 / CCUG 17765 / NCTC 10094 / 16M).